Reading from the N-terminus, the 248-residue chain is PF03932 family protein CutC (248 aa).

The protein belongs to the CutC family.

The protein resides in the cytoplasm. The protein is PF03932 family protein CutC of Photorhabdus laumondii subsp. laumondii (strain DSM 15139 / CIP 105565 / TT01) (Photorhabdus luminescens subsp. laumondii).